Consider the following 188-residue polypeptide: Protein GrpE (188 aa).

Positions 1–24 (MSDENKPGEAAELDAGVAPEAQPE) are disordered.

The protein belongs to the GrpE family. As to quaternary structure, homodimer.

Its subcellular location is the cytoplasm. Functionally, participates actively in the response to hyperosmotic and heat shock by preventing the aggregation of stress-denatured proteins, in association with DnaK and GrpE. It is the nucleotide exchange factor for DnaK and may function as a thermosensor. Unfolded proteins bind initially to DnaJ; upon interaction with the DnaJ-bound protein, DnaK hydrolyzes its bound ATP, resulting in the formation of a stable complex. GrpE releases ADP from DnaK; ATP binding to DnaK triggers the release of the substrate protein, thus completing the reaction cycle. Several rounds of ATP-dependent interactions between DnaJ, DnaK and GrpE are required for fully efficient folding. The chain is Protein GrpE from Hyphomonas neptunium (strain ATCC 15444).